A 275-amino-acid polypeptide reads, in one-letter code: Putative carbamate hydrolase RutD (275 aa).

This sequence belongs to the AB hydrolase superfamily. Hydrolase RutD family.

The enzyme catalyses carbamate + 2 H(+) = NH4(+) + CO2. Functionally, involved in pyrimidine catabolism. May facilitate the hydrolysis of carbamate, a reaction that can also occur spontaneously. The sequence is that of Putative carbamate hydrolase RutD from Escherichia coli O6:H1 (strain CFT073 / ATCC 700928 / UPEC).